The sequence spans 258 residues: MGRVIRAQRKGAGSVFKSHTHHRKGPAKFRSLDFGERNGYLKGVVTEIIHDPGRGAPLARVAFRHPFRFKKQKELFVAAEGMYTGQFLYCGKKATLVVGNVLPLRSIPEGAVICNVEHHVGDRGVFARASGDYAIVIAHNPDNDTSRIKLPSGSKKIVPSGCRAMIGQVAGGGRTEKPMLKAGNAYHKYRVKRNCWPKVRGVAMNPVEHPHGGGNHQHIGHASTVRRDAPPGKKVGLIAARRTGRLRGQAAALASKAD.

The interval 211–231 (HGGGNHQHIGHASTVRRDAPP) is disordered.

This sequence belongs to the universal ribosomal protein uL2 family.

The protein is Large ribosomal subunit protein uL2x (RPL8C) of Arabidopsis thaliana (Mouse-ear cress).